The primary structure comprises 280 residues: Diaminopimelate epimerase (280 aa).

Substrate is bound by residues Asn-13 and Asn-67. Cys-76 acts as the Proton donor in catalysis. Residues 77–78 (GN), Asn-191, and 208–209 (ER) contribute to the substrate site. The active-site Proton acceptor is the Cys-218. 219 to 220 (GT) serves as a coordination point for substrate.

Belongs to the diaminopimelate epimerase family. As to quaternary structure, homodimer.

The protein localises to the cytoplasm. The catalysed reaction is (2S,6S)-2,6-diaminopimelate = meso-2,6-diaminopimelate. The protein operates within amino-acid biosynthesis; L-lysine biosynthesis via DAP pathway; DL-2,6-diaminopimelate from LL-2,6-diaminopimelate: step 1/1. Functionally, catalyzes the stereoinversion of LL-2,6-diaminopimelate (L,L-DAP) to meso-diaminopimelate (meso-DAP), a precursor of L-lysine. The chain is Diaminopimelate epimerase from Archaeoglobus fulgidus (strain ATCC 49558 / DSM 4304 / JCM 9628 / NBRC 100126 / VC-16).